We begin with the raw amino-acid sequence, 130 residues long: Snaclec B8 (130 aa).

Cystine bridges form between Cys-2–Cys-13, Cys-30–Cys-124, and Cys-99–Cys-116. A C-type lectin domain is found at 9 to 125; sequence HEGHCYKVFK…CELAYHFICM (117 aa).

The protein belongs to the snaclec family. As to quaternary structure, heterodimer; disulfide-linked. As to expression, expressed by the venom gland.

The protein localises to the secreted. Its function is as follows. Interferes with one step of hemostasis (modulation of platelet aggregation, or coagulation cascade, for example). The sequence is that of Snaclec B8 from Macrovipera lebetinus (Levantine viper).